A 330-amino-acid polypeptide reads, in one-letter code: Biotin synthase (330 aa).

A Radical SAM core domain is found at 55–282; it reads NAVQRSTLLS…TAYVRLSAGR (228 aa). [4Fe-4S] cluster-binding residues include Cys-70, Cys-74, and Cys-77. The [2Fe-2S] cluster site is built by Cys-114, Cys-145, Cys-205, and Arg-277.

The protein belongs to the radical SAM superfamily. Biotin synthase family. As to quaternary structure, homodimer. Requires [4Fe-4S] cluster as cofactor. [2Fe-2S] cluster serves as cofactor.

The catalysed reaction is (4R,5S)-dethiobiotin + (sulfur carrier)-SH + 2 reduced [2Fe-2S]-[ferredoxin] + 2 S-adenosyl-L-methionine = (sulfur carrier)-H + biotin + 2 5'-deoxyadenosine + 2 L-methionine + 2 oxidized [2Fe-2S]-[ferredoxin]. It functions in the pathway cofactor biosynthesis; biotin biosynthesis; biotin from 7,8-diaminononanoate: step 2/2. Functionally, catalyzes the conversion of dethiobiotin (DTB) to biotin by the insertion of a sulfur atom into dethiobiotin via a radical-based mechanism. The sequence is that of Biotin synthase from Methylibium petroleiphilum (strain ATCC BAA-1232 / LMG 22953 / PM1).